The primary structure comprises 388 residues: DNA primase small subunit PriS (388 aa).

Residues Asp100, Asp102, and Asp288 contribute to the active site.

This sequence belongs to the eukaryotic-type primase small subunit family. In terms of assembly, heterodimer of a small subunit (PriS) and a large subunit (PriL). Requires Mg(2+) as cofactor. Mn(2+) serves as cofactor.

Functionally, catalytic subunit of DNA primase, an RNA polymerase that catalyzes the synthesis of short RNA molecules used as primers for DNA polymerase during DNA replication. The small subunit contains the primase catalytic core and has DNA synthesis activity on its own. Binding to the large subunit stabilizes and modulates the activity, increasing the rate of DNA synthesis while decreasing the length of the DNA fragments, and conferring RNA synthesis capability. The DNA polymerase activity may enable DNA primase to also catalyze primer extension after primer synthesis. May also play a role in DNA repair. This is DNA primase small subunit PriS from Methanospirillum hungatei JF-1 (strain ATCC 27890 / DSM 864 / NBRC 100397 / JF-1).